A 1044-amino-acid polypeptide reads, in one-letter code: AT-rich interactive domain-containing protein 5B (1044 aa).

Disordered regions lie at residues 143-211 (PRKK…GDEC), 301-350 (RFTK…GDKD), 363-392 (MEELQEKQNSQQLQAPTQTDRDPNSPLTED), 554-591 (NNYPYGPPPPLVSRRLSSSGTEVSSAGQSSSQVSSSVE), 603-672 (QHAQ…SFLS), 733-767 (SQKEKGPPPERVTEEQPTDLSLPKSSPLKLPLSTS), 811-835 (VSASKKVTESHSKVLEKTPNSRGEE), and 884-912 (TPLHCSTQRDLPGKPRTPEADSESVKPAE). Basic and acidic residues-rich tracts occupy residues 197-211 (VQSENKPKGDGGDEC), 301-310 (RFTKGEEDKP), and 337-350 (RPKDEQKTPRGDKD). One can recognise an ARID domain in the interval 212–304 (RTDEQAFLVA…LILPYERFTK (93 aa)). Polar residues predominate over residues 369-380 (KQNSQQLQAPTQ). The segment covering 565–591 (VSRRLSSSGTEVSSAGQSSSQVSSSVE) has biased composition (low complexity). Basic and acidic residues-rich tracts occupy residues 611 to 635 (RGSEDRRSSTEGSQKDGCSEGEPVH), 644 to 660 (PYLKRVDPHSSMEKSAE), and 733 to 746 (SQKEKGPPPERVTE). Over residues 752–767 (LSLPKSSPLKLPLSTS) the composition is skewed to low complexity. Composition is skewed to basic and acidic residues over residues 816 to 826 (KVTESHSKVLE) and 894 to 909 (LPGKPRTPEADSESVK).

This sequence belongs to the ARID5B family.

It localises to the nucleus. Its function is as follows. Transcription coactivator that binds to the 5'-AATA[CT]-3' core sequence and plays a key role in adipogenesis and liver development. Required for adipogenesis: regulates triglyceride metabolism in adipocytes by regulating expression of adipogenic genes. The protein is AT-rich interactive domain-containing protein 5B (arid5b) of Danio rerio (Zebrafish).